Here is a 629-residue protein sequence, read N- to C-terminus: Protein EDS1B (629 aa).

The Nucleophile role is filled by serine 123. Active-site charge relay system residues include aspartate 187 and histidine 317.

As to quaternary structure, interacts (via N-terminus) with PAD4 and SAG101. Part of a nuclear complex made of EDS1, PAD4 and SAG101, that can be redirected to the cytoplasm in the presence of an extranuclear form of EDS1. Does not interact with itself or with EDS1.

The protein localises to the nucleus. It is found in the cytoplasm. Functionally, acts as a second functional copy of EDS1. Can mediate HRT-mediated resistance to turnip crinkle virus. This is Protein EDS1B (EDS1B) from Arabidopsis thaliana (Mouse-ear cress).